Here is a 193-residue protein sequence, read N- to C-terminus: p53 apoptosis effector related to PMP-22 (193 aa).

The next 4 helical transmembrane spans lie at 12 to 32 (RWILPLLLLSAIAFDIIALAG), 79 to 99 (AMLFCGFIILVICFILSFFAL), 110 to 130 (VIGGLLALAAVFQIISLVIYP), and 151 to 171 (WAYGFGWAATIILIGCAFFFC).

It belongs to the TMEM47 family. As to quaternary structure, (Microbial infection) Interacts with S.typhimurium sipA and sctB1/sipC. In terms of tissue distribution, expressed in skin, heart, placental, liver, pancreas, keratinocytes and dermal fibroblasts. May translocate to the intestinal apical epithelial cell surface via sipA and sctB1/sipC-promoted exocytic translocation following infection by S. Typhimurium.

Its subcellular location is the cell junction. The protein resides in the desmosome. The protein localises to the cell membrane. It is found in the cytoplasm. Functionally, component of intercellular desmosome junctions. Plays a role in stratified epithelial integrity and cell-cell adhesion by promoting desmosome assembly. Thereby plays a role in barrier function of the skin against infection. Plays a role in mammary epithelial tissue homeostasis and remodeling during and after pregnancy, potentially via its involvement in desmosome cell-cell junctions. Required for tooth enamel development via facilitating desmosome-mediated ameloblast adhesion to the stratum intermedium during the transitional stage of amelogenesis. May also play a role in downstream transcriptional regulation of other genes involved in amelogenesis such as AMBN, ENAM, MMP20 and KLK4. Plays a role as an effector in the TP53-dependent apoptotic pathway. Positively regulates apoptosis in T-helper 17 (Th17) cell populations via caspase-dependent signaling. Promotes neutrophil transepithelial migration in response to chemoattractants such as hepoxilin A3 (HXA3), N-Formylmethionyl-leucyl-phenylalanine (fMLP) and CXCL8/IL-8. Required for neutrophil transepithelial migration in response to S.typhimurium infection. May act as a positive regulator of endothelial cell apoptosis in response to blood flow-derived shear stress. The protein is p53 apoptosis effector related to PMP-22 of Homo sapiens (Human).